We begin with the raw amino-acid sequence, 775 residues long: 5-methyltetrahydropteroyltriglutamate--homocysteine methyltransferase (775 aa).

Residues 16 to 19 (REMK) and lysine 115 each bind 5-methyltetrahydropteroyltri-L-glutamate. L-homocysteine is bound by residues 435–437 (IGS) and glutamate 488. L-methionine is bound by residues 435 to 437 (IGS) and glutamate 488. 5-methyltetrahydropteroyltri-L-glutamate is bound by residues 519–520 (RC) and tryptophan 565. L-homocysteine is bound at residue aspartate 603. Aspartate 603 contributes to the L-methionine binding site. Glutamate 609 provides a ligand contact to 5-methyltetrahydropteroyltri-L-glutamate. Residues histidine 645, cysteine 647, and glutamate 669 each contribute to the Zn(2+) site. Histidine 698 functions as the Proton donor in the catalytic mechanism. Cysteine 730 is a binding site for Zn(2+).

Belongs to the vitamin-B12 independent methionine synthase family. Zn(2+) serves as cofactor.

The catalysed reaction is 5-methyltetrahydropteroyltri-L-glutamate + L-homocysteine = tetrahydropteroyltri-L-glutamate + L-methionine. It functions in the pathway amino-acid biosynthesis; L-methionine biosynthesis via de novo pathway; L-methionine from L-homocysteine (MetE route): step 1/1. Its function is as follows. Catalyzes the transfer of a methyl group from 5-methyltetrahydrofolate to homocysteine resulting in methionine formation. The sequence is that of 5-methyltetrahydropteroyltriglutamate--homocysteine methyltransferase from Coxiella burnetii (strain CbuG_Q212) (Coxiella burnetii (strain Q212)).